The chain runs to 218 residues: Protein GrpE (218 aa).

The interval 1–78 is disordered; that stretch reads MSEFNKDDYL…DSADTLTPLG (78 aa). Over residues 14–58 the composition is skewed to low complexity; that stretch reads PDPSDAEAAAQASSGADASAESGSAQDSAAQAPSNEGADAAPAAA.

This sequence belongs to the GrpE family. As to quaternary structure, homodimer.

It is found in the cytoplasm. Its function is as follows. Participates actively in the response to hyperosmotic and heat shock by preventing the aggregation of stress-denatured proteins, in association with DnaK and GrpE. It is the nucleotide exchange factor for DnaK and may function as a thermosensor. Unfolded proteins bind initially to DnaJ; upon interaction with the DnaJ-bound protein, DnaK hydrolyzes its bound ATP, resulting in the formation of a stable complex. GrpE releases ADP from DnaK; ATP binding to DnaK triggers the release of the substrate protein, thus completing the reaction cycle. Several rounds of ATP-dependent interactions between DnaJ, DnaK and GrpE are required for fully efficient folding. The chain is Protein GrpE from Bifidobacterium longum (strain NCC 2705).